Here is a 493-residue protein sequence, read N- to C-terminus: Trigger factor (493 aa).

A PPIase FKBP-type domain is found at 162-243; sequence GDFVSLDLSA…VRGVKEKELP (82 aa). A disordered region spans residues 432–493; that stretch reads ELALPARPAP…AAVDSGDRDI (62 aa). The segment covering 449–470 has biased composition (basic and acidic residues); that stretch reads HAGHDHEGHDHADHAGHDHAGD. Residues 474–485 are compositionally biased toward low complexity; that stretch reads AEPAEAPAATAA.

Belongs to the FKBP-type PPIase family. Tig subfamily.

It is found in the cytoplasm. The catalysed reaction is [protein]-peptidylproline (omega=180) = [protein]-peptidylproline (omega=0). In terms of biological role, involved in protein export. Acts as a chaperone by maintaining the newly synthesized protein in an open conformation. Functions as a peptidyl-prolyl cis-trans isomerase. This Frankia alni (strain DSM 45986 / CECT 9034 / ACN14a) protein is Trigger factor.